The primary structure comprises 79 residues: Acyl carrier protein (79 aa).

Residues 2 to 77 (STIEERVKKI…QAIDYVKSHV (76 aa)) form the Carrier domain. At serine 37 the chain carries O-(pantetheine 4'-phosphoryl)serine.

Belongs to the acyl carrier protein (ACP) family. 4'-phosphopantetheine is transferred from CoA to a specific serine of apo-ACP by AcpS. This modification is essential for activity because fatty acids are bound in thioester linkage to the sulfhydryl of the prosthetic group.

It is found in the cytoplasm. Its pathway is lipid metabolism; fatty acid biosynthesis. Carrier of the growing fatty acid chain in fatty acid biosynthesis. The protein is Acyl carrier protein of Xanthomonas oryzae pv. oryzae (strain MAFF 311018).